Consider the following 930-residue polypeptide: Translation initiation factor IF-2 (930 aa).

The span at 50–67 (FKPAAAPKVEAKPAAPKV) shows a compositional bias: low complexity. Disordered stretches follow at residues 50–217 (FKPA…SSEE) and 260–346 (EVVP…HELP). Composition is skewed to basic and acidic residues over residues 68–90 (SAEKKAEKSEPAKPAVAKEEAKP) and 110–125 (FKAEREARAKEQAERR). Positions 129-141 (KGNNRDQQQNGNR) are enriched in low complexity. Basic and acidic residues-rich tracts occupy residues 157-167 (RDNRRFNDQAK) and 262-295 (VPEKKEPAVDTRRKKQARPDKNRDDYDHEEDGPR). Low complexity predominate over residues 309–318 (NQKNSNWNNN). Residues 337 to 346 (VTERKFHELP) are compositionally biased toward basic and acidic residues. A tr-type G domain is found at 432–599 (ERPPVVTIMG…TVLLVAEIQE (168 aa)). The interval 441–448 (GHVDHGKT) is G1. 441-448 (GHVDHGKT) contributes to the GTP binding site. A G2 region spans residues 466–470 (GITQH). Residues 487–490 (DTPG) are G3. GTP is bound by residues 487 to 491 (DTPGH) and 541 to 544 (NKID). The segment at 541 to 544 (NKID) is G4. Residues 577-579 (SAK) are G5.

It belongs to the TRAFAC class translation factor GTPase superfamily. Classic translation factor GTPase family. IF-2 subfamily.

It localises to the cytoplasm. In terms of biological role, one of the essential components for the initiation of protein synthesis. Protects formylmethionyl-tRNA from spontaneous hydrolysis and promotes its binding to the 30S ribosomal subunits. Also involved in the hydrolysis of GTP during the formation of the 70S ribosomal complex. The polypeptide is Translation initiation factor IF-2 (Streptococcus pneumoniae (strain CGSP14)).